The following is a 314-amino-acid chain: Basic endochitinase (314 aa).

Positions 1 to 20 (MGLWALVAFCLLSLILVGSA) are cleaved as a signal peptide. The Chitin-binding type-1 domain maps to 21 to 61 (EQCGGQAGGRVCPGGACCSKFGWCGNTADYCGSGCQSQCSS). Disulfide bonds link C23/C38, C32/C44, C37/C51, C55/C59, C86/C148, C160/C168, and C267/C299. Catalysis depends on E130, which acts as the Proton donor.

The protein belongs to the glycosyl hydrolase 19 family. Chitinase class I subfamily.

The enzyme catalyses Random endo-hydrolysis of N-acetyl-beta-D-glucosaminide (1-&gt;4)-beta-linkages in chitin and chitodextrins.. Functionally, defense against chitin-containing fungal pathogens. This is Basic endochitinase (CHIT1B) from Vitis vinifera (Grape).